The sequence spans 298 residues: Zinc-alpha-2-glycoprotein (298 aa).

Positions 1-20 are cleaved as a signal peptide; that stretch reads MVRMVPVLLSLLLLLGPAVP. Glutamine 21 bears the Pyrrolidone carboxylic acid mark. N-linked (GlcNAc...) (complex) asparagine glycosylation is present at asparagine 109. Asparagine 112 is a glycosylation site (N-linked (GlcNAc...) asparagine). 2 cysteine pairs are disulfide-bonded: cysteine 123–cysteine 186 and cysteine 225–cysteine 280. Residue asparagine 128 is glycosylated (N-linked (GlcNAc...) (complex) asparagine). An Ig-like C1-type domain is found at 207–292; the sequence is PSVVVTSHQA…QHSSLAQPLV (86 aa). Asparagine 259 carries N-linked (GlcNAc...) asparagine glycosylation.

This sequence belongs to the MHC class I family. In terms of assembly, interacts with PIP. Post-translationally, N-glycosylated. N-glycan at Asn-128: Hex5HexNAc4. In terms of tissue distribution, blood plasma, seminal plasma, urine, saliva, sweat, epithelial cells of various human glands, liver.

The protein resides in the secreted. In terms of biological role, stimulates lipid degradation in adipocytes and causes the extensive fat losses associated with some advanced cancers. May bind polyunsaturated fatty acids. This chain is Zinc-alpha-2-glycoprotein (AZGP1), found in Homo sapiens (Human).